The following is a 130-amino-acid chain: UPF0102 protein BT_1882 (130 aa).

Belongs to the UPF0102 family.

The polypeptide is UPF0102 protein BT_1882 (Bartonella tribocorum (strain CIP 105476 / IBS 506)).